A 600-amino-acid chain; its full sequence is Aspartate--tRNA(Asp/Asn) ligase (600 aa).

Residue glutamate 181 coordinates L-aspartate. Positions 205–208 (QQFK) are aspartate. An L-aspartate-binding site is contributed by arginine 227. Residues 227 to 229 (RDE) and glutamine 236 each bind ATP. Histidine 455 contributes to the L-aspartate binding site. ATP is bound at residue glutamate 489. Position 496 (arginine 496) interacts with L-aspartate. 541–544 (GIDR) serves as a coordination point for ATP.

This sequence belongs to the class-II aminoacyl-tRNA synthetase family. Type 1 subfamily. In terms of assembly, homodimer.

It localises to the cytoplasm. It catalyses the reaction tRNA(Asx) + L-aspartate + ATP = L-aspartyl-tRNA(Asx) + AMP + diphosphate. Aspartyl-tRNA synthetase with relaxed tRNA specificity since it is able to aspartylate not only its cognate tRNA(Asp) but also tRNA(Asn). Reaction proceeds in two steps: L-aspartate is first activated by ATP to form Asp-AMP and then transferred to the acceptor end of tRNA(Asp/Asn). The polypeptide is Aspartate--tRNA(Asp/Asn) ligase (Rubrobacter xylanophilus (strain DSM 9941 / JCM 11954 / NBRC 16129 / PRD-1)).